The sequence spans 459 residues: tRNA modification GTPase MnmE (459 aa).

(6S)-5-formyl-5,6,7,8-tetrahydrofolate-binding residues include Arg22, Glu85, and Arg124. Residues 221–380 enclose the TrmE-type G domain; it reads GLSTVIVGKP…LEIQIRDLFF (160 aa). Position 231 (Asn231) interacts with K(+). GTP is bound by residues 231–236, 250–256, and 275–278; these read NVGKSS, TEVAGTT, and DTAG. Ser235 contributes to the Mg(2+) binding site. Thr250, Val252, and Thr255 together coordinate K(+). Thr256 is a Mg(2+) binding site. Residue Lys459 participates in (6S)-5-formyl-5,6,7,8-tetrahydrofolate binding.

It belongs to the TRAFAC class TrmE-Era-EngA-EngB-Septin-like GTPase superfamily. TrmE GTPase family. As to quaternary structure, homodimer. Heterotetramer of two MnmE and two MnmG subunits. It depends on K(+) as a cofactor.

Its subcellular location is the cytoplasm. Functionally, exhibits a very high intrinsic GTPase hydrolysis rate. Involved in the addition of a carboxymethylaminomethyl (cmnm) group at the wobble position (U34) of certain tRNAs, forming tRNA-cmnm(5)s(2)U34. The polypeptide is tRNA modification GTPase MnmE (Staphylococcus aureus (strain MW2)).